The primary structure comprises 458 residues: Lysine-rich nucleolar protein 1 (458 aa).

Residues 1–14 (MITKTHKVDLGLPE) are compositionally biased toward basic and acidic residues. The tract at residues 1–21 (MITKTHKVDLGLPEKKKKKKV) is disordered. Residue Lys-7 forms a Glycyl lysine isopeptide (Lys-Gly) (interchain with G-Cter in SUMO2) linkage. Ser-42 and Ser-50 each carry phosphoserine. The disordered stretch occupies residues 46–305 (ATSPSKSVAH…ESGVAGDPWK (260 aa)). Positions 64–73 (VKKKKKKKKG) are enriched in basic residues. A Glycyl lysine isopeptide (Lys-Gly) (interchain with G-Cter in SUMO2) cross-link involves residue Lys-101. Ser-111 is modified (phosphoserine). Lys-130 participates in a covalent cross-link: Glycyl lysine isopeptide (Lys-Gly) (interchain with G-Cter in SUMO2). A Phosphoserine modification is found at Ser-132. Residues 145 to 155 (GKKLKKHKKEK) show a composition bias toward basic residues. Residues 173 to 192 (EAREARDVGDTCSVGKKDEE) show a composition bias toward basic and acidic residues. Over residues 198–218 (QKRKRKSPREHNGKVKKKKKI) the composition is skewed to basic residues. A Glycyl lysine isopeptide (Lys-Gly) (interchain with G-Cter in SUMO1); alternate cross-link involves residue Lys-249. Lys-249 participates in a covalent cross-link: Glycyl lysine isopeptide (Lys-Gly) (interchain with G-Cter in SUMO2); alternate. The residue at position 265 (Ser-265) is a Phosphoserine. Residues 265–274 (SAKKKMKSKK) show a composition bias toward basic residues. Residues Lys-275, Lys-287, and Lys-305 each participate in a glycyl lysine isopeptide (Lys-Gly) (interchain with G-Cter in SUMO2) cross-link. The interval 306–458 (EETDTDLEVV…NASKSVKLED (153 aa)) is interaction with ZNF106. A phosphothreonine mark is found at Thr-308 and Thr-310. Residues Lys-319, Lys-353, Lys-373, Lys-375, and Lys-407 each participate in a glycyl lysine isopeptide (Lys-Gly) (interchain with G-Cter in SUMO2) cross-link. Over residues 336–353 (QEEIDRESGKTEASETRK) the composition is skewed to basic and acidic residues. The segment at 336–355 (QEEIDRESGKTEASETRKWT) is disordered. An Omega-N-methylarginine modification is found at Arg-430. A Glycyl lysine isopeptide (Lys-Gly) (interchain with G-Cter in SUMO2) cross-link involves residue Lys-442.

As to quaternary structure, interacts with ZNF106.

Its subcellular location is the nucleus. The protein localises to the nucleolus. The chain is Lysine-rich nucleolar protein 1 (KNOP1) from Homo sapiens (Human).